An 89-amino-acid chain; its full sequence is Small ribosomal subunit protein uS15 (89 aa).

Belongs to the universal ribosomal protein uS15 family. As to quaternary structure, part of the 30S ribosomal subunit. Forms a bridge to the 50S subunit in the 70S ribosome, contacting the 23S rRNA.

One of the primary rRNA binding proteins, it binds directly to 16S rRNA where it helps nucleate assembly of the platform of the 30S subunit by binding and bridging several RNA helices of the 16S rRNA. In terms of biological role, forms an intersubunit bridge (bridge B4) with the 23S rRNA of the 50S subunit in the ribosome. The sequence is that of Small ribosomal subunit protein uS15 from Pseudomonas fluorescens (strain SBW25).